A 326-amino-acid chain; its full sequence is Putative F-box protein At3g22710 (326 aa).

Positions 1 to 50 constitute an F-box domain; that stretch reads MTMPDLPPDLVEEILSRVPATSVKKLRSTCTQWNAIFKDERFTEKHFSKA.

This is Putative F-box protein At3g22710 from Arabidopsis thaliana (Mouse-ear cress).